A 1036-amino-acid polypeptide reads, in one-letter code: Lethal(2) giant larvae protein homolog 1 (1036 aa).

WD repeat units lie at residues 38–71 (SALAFDPELRIMAIGTRSGAVKIYGAPGVEFTGL), 78–119 (VTQM…GLSF), 139–175 (VTVVLLAAGDTVVLGTESGSIFFLDVATLALLEGQTL), 199–233 (SLQGHLQDPSKILIGYSRGLLVIWSQATQSVEHVF), 239–271 (LESLCWGRGGSNIISSHSDGSYAIWSTDTGSPP), 289–331 (AINK…ETLV), 339–373 (VIDFFTVHSTQPEDGFDNPQALAVLLEEELVVLDL), 395–473 (TCSA…YKLS), 517–592 (QKVA…RVLI), and 601–662 (TAVA…LRQS). Serine 662 carries the post-translational modification Phosphoserine. Positions 670-694 (RVSGKKRATTASSKLQEANAQLAEQ) are disordered. Polar residues predominate over residues 678–693 (TTASSKLQEANAQLAE). 4 WD repeats span residues 722-782 (VRCL…KEVQ), 791-843 (AIAV…VSAK), 848-901 (LTAH…VHYS), and 915-938 (VFTRHGQGFYLISPSEFERFSLSA). Threonine 957 is modified (phosphothreonine). Serine 964, serine 982, and serine 989 each carry phosphoserine. Residues 980 to 1002 (PESCEGSPSSAHSKRADTMEPPE) are disordered.

It belongs to the WD repeat L(2)GL family. Associated with nonmuscle myosin II heavy chain. Interacts with PRKCI/aPKC, PARD6B/Par-6 and PARD6A. Interacts with STX4A. Interacts with DCAF1. Interacts with RAB10 (GDP-bound form); the interaction is direct and promotes RAB10 association with membranes and activation through competition with the Rab inhibitor GDI1. Post-translationally, phosphorylated by PRKCI. As to expression, expressed at high level in the testis and at lower level in ovary, brain, spleen and kidney.

Its subcellular location is the early endosome membrane. It is found in the golgi apparatus. The protein localises to the trans-Golgi network membrane. It localises to the golgi apparatus membrane. The protein resides in the cell projection. Its subcellular location is the axon. It is found in the cytoplasm. The protein localises to the cytoskeleton. Functionally, cortical cytoskeleton protein found in a complex involved in maintaining cell polarity and epithelial integrity. Involved in the regulation of mitotic spindle orientation, proliferation, differentiation and tissue organization of neuroepithelial cells. Involved in axonogenesis through RAB10 activation thereby regulating vesicular membrane trafficking toward the axonal plasma membrane. This Rattus norvegicus (Rat) protein is Lethal(2) giant larvae protein homolog 1 (Llgl1).